A 657-amino-acid chain; its full sequence is Splicing factor Cactin (657 aa).

Residues 1 to 15 (MGKDSKKHKKERRRE) show a composition bias toward basic residues. Disordered regions lie at residues 1-83 (MGKD…EDTL), 369-406 (QESEELLPVAEVPPQVKIQKEEEEEEEEDEDDEKISKK), and 472-503 (ADVDNLTERRNRNRGTLPSSSAASSGAPQGAS). Coiled-coil stretches lie at residues 23 to 77 (SDEE…RKDA) and 352 to 403 (RLQL…DEKI). The span at 26-60 (ERLQKRLAEQRSLKKDEKRRQKEEMKKNESAEEKR) shows a compositional bias: basic and acidic residues. Basic residues predominate over residues 61–72 (ARRMEKKMRKDA). Over residues 389–401 (EEEEEEEEDEDDE) the composition is skewed to acidic residues. Low complexity predominate over residues 489–503 (PSSSAASSGAPQGAS).

The protein belongs to the CACTIN family. As to expression, expressed in pharynx, intestine, vulva and spermatheca (at protein level).

The protein resides in the nucleus. It localises to the cytoplasm. Functionally, plays a role in pre-mRNA splicing by facilitating excision of a subset of introns. Plays a role during early embryonic development. Required for the distal tip cell migration at the end of larval development and for gonad morphogenesis. This Caenorhabditis elegans protein is Splicing factor Cactin (cacn-1).